The primary structure comprises 446 residues: Exodeoxyribonuclease 7 large subunit (446 aa).

It belongs to the XseA family. As to quaternary structure, heterooligomer composed of large and small subunits.

Its subcellular location is the cytoplasm. It catalyses the reaction Exonucleolytic cleavage in either 5'- to 3'- or 3'- to 5'-direction to yield nucleoside 5'-phosphates.. Its function is as follows. Bidirectionally degrades single-stranded DNA into large acid-insoluble oligonucleotides, which are then degraded further into small acid-soluble oligonucleotides. The protein is Exodeoxyribonuclease 7 large subunit of Vibrio cholerae serotype O1 (strain ATCC 39315 / El Tor Inaba N16961).